The primary structure comprises 751 residues: Photosystem I P700 chlorophyll a apoprotein A1 (751 aa).

8 helical membrane passes run 73 to 96, 159 to 182, 198 to 222, 294 to 312, 349 to 372, 388 to 414, 436 to 458, and 533 to 551; these read VFSAHFGQLGIIFIWLSGMYFHGA, LYATAIGGLVMAAAMFFAGWFHYH, MNHHLAGLLGLGSLAWAGHQIHISL, EAHHHLAIAVLFLIAGHQY, WHAQLAINLAMLGSLSIIVAHHMY, LSLFTHHVWIGGFCIVGAGAHAAIFMV, AIISHLNWVCIFLGFHSFGLYIH, and FLVHHIHAFTIHVTVLILL. 2 residues coordinate [4Fe-4S] cluster: Cys-575 and Cys-584. Helical transmembrane passes span 591–612 and 665–687; these read HVFLGLFWMYNSLSIVIFHFSW and LSAYGLMFLGAHFVWAFSLMFLF. A chlorophyll a'-binding site is contributed by His-676. Residues Met-684 and Tyr-692 each coordinate chlorophyll a. Trp-693 serves as a coordination point for phylloquinone. A helical membrane pass occupies residues 725–745; sequence AVGVAHYLLGGIATTWSFFLA.

It belongs to the PsaA/PsaB family. As to quaternary structure, the PsaA/B heterodimer binds the P700 chlorophyll special pair and subsequent electron acceptors. PSI consists of a core antenna complex that captures photons, and an electron transfer chain that converts photonic excitation into a charge separation. The eukaryotic PSI reaction center is composed of at least 11 subunits. It depends on P700 is a chlorophyll a/chlorophyll a' dimer, A0 is one or more chlorophyll a, A1 is one or both phylloquinones and FX is a shared 4Fe-4S iron-sulfur center. as a cofactor.

It localises to the plastid. The protein resides in the chloroplast thylakoid membrane. The catalysed reaction is reduced [plastocyanin] + hnu + oxidized [2Fe-2S]-[ferredoxin] = oxidized [plastocyanin] + reduced [2Fe-2S]-[ferredoxin]. Functionally, psaA and PsaB bind P700, the primary electron donor of photosystem I (PSI), as well as the electron acceptors A0, A1 and FX. PSI is a plastocyanin/cytochrome c6-ferredoxin oxidoreductase, converting photonic excitation into a charge separation, which transfers an electron from the donor P700 chlorophyll pair to the spectroscopically characterized acceptors A0, A1, FX, FA and FB in turn. Oxidized P700 is reduced on the lumenal side of the thylakoid membrane by plastocyanin or cytochrome c6. In Oltmannsiellopsis viridis (Marine flagellate), this protein is Photosystem I P700 chlorophyll a apoprotein A1.